Reading from the N-terminus, the 513-residue chain is GMP synthase [glutamine-hydrolyzing] (513 aa).

Positions 8-198 (MILVLDFGSQ…VFGVCDCEGK (191 aa)) constitute a Glutamine amidotransferase type-1 domain. Residue Cys-85 is the Nucleophile of the active site. Residues His-172 and Glu-174 contribute to the active site. The 190-residue stretch at 199–388 (WSMENFIEIE…LGLPDDIVWR (190 aa)) folds into the GMPS ATP-PPase domain. 226–232 (SGGVDSS) contributes to the ATP binding site.

In terms of assembly, homodimer.

The catalysed reaction is XMP + L-glutamine + ATP + H2O = GMP + L-glutamate + AMP + diphosphate + 2 H(+). It participates in purine metabolism; GMP biosynthesis; GMP from XMP (L-Gln route): step 1/1. Catalyzes the synthesis of GMP from XMP. This is GMP synthase [glutamine-hydrolyzing] from Bacillus velezensis (strain DSM 23117 / BGSC 10A6 / LMG 26770 / FZB42) (Bacillus amyloliquefaciens subsp. plantarum).